Consider the following 592-residue polypeptide: Tegument protein US23 (592 aa).

A disordered region spans residues 407 to 491; that stretch reads PRSLGDGEEE…NNVVPNVERR (85 aa). Acidic residues predominate over residues 460-481; the sequence is ADDEEQGEDDDDSGAEPMEPEE.

The protein belongs to the herpesviridae US22 family.

The protein resides in the virion tegument. This is Tegument protein US23 (US23) from Homo sapiens (Human).